A 144-amino-acid polypeptide reads, in one-letter code: Large ribosomal subunit protein uL16 (144 aa).

This sequence belongs to the universal ribosomal protein uL16 family. In terms of assembly, part of the 50S ribosomal subunit.

Its function is as follows. Binds 23S rRNA and is also seen to make contacts with the A and possibly P site tRNAs. This chain is Large ribosomal subunit protein uL16, found in Clostridium botulinum (strain Alaska E43 / Type E3).